A 420-amino-acid polypeptide reads, in one-letter code: Protein disulfide isomerase CRELD1 (420 aa).

Residues 1–29 (MAPRSSRGIAPAMLCGLSLFLGFPGLVWV) form the signal peptide. The Extracellular segment spans residues 30–362 (QISVPPQSSP…GFFSEMTEDE (333 aa)). The CXXC signature appears at 46-49 (CHTC). 4 disulfide bridges follow: Cys46/Cys49, Cys155/Cys169, Cys163/Cys181, and Cys183/Cys192. The EGF-like 1 domain occupies 153–193 (LPCPGGAERPCGGYGHCEGEGTRGGSGHCDCQAGYGGEACG). Asn205 is a glycosylation site (N-linked (GlcNAc...) asparagine). FU repeat units follow at residues 208–255 (HLVC…ERAS) and 268–315 (SYEC…AVCP). Residues 278-281 (CLGC) carry the CXXC motif. 4 disulfides stabilise this stretch: Cys278-Cys281, Cys309-Cys321, Cys314-Cys330, and Cys332-Cys343. An EGF-like 2; calcium-binding domain is found at 305-344 (DVDECETAVCPGENQQCENTEGSYRCICADGYKQMEGICV). Residues 363 to 383 (LVVLQQMFFGVIICALATLAA) form a helical membrane-spanning segment. Position 384 (Lys384) is a topological domain, cytoplasmic. Residues 385 to 405 (GDLVFTAIFIGAVAAMTGYWL) form a helical membrane-spanning segment. Over 406–420 (SERSDRVLEGFIKGR) the chain is Extracellular.

It belongs to the CRELD family.

It is found in the membrane. The catalysed reaction is Catalyzes the rearrangement of -S-S- bonds in proteins.. In terms of biological role, protein disulfide isomerase. Promotes the localization of acetylcholine receptors (AChRs) to the plasma membrane. The protein is Protein disulfide isomerase CRELD1 (CRELD1) of Bos taurus (Bovine).